Consider the following 737-residue polypeptide: Zinc finger protein 280C (737 aa).

Glycyl lysine isopeptide (Lys-Gly) (interchain with G-Cter in SUMO2) cross-links involve residues lysine 5, lysine 10, lysine 14, lysine 33, and lysine 55. Polar residues predominate over residues 57-66; that stretch reads AISNILNRGH. The segment at 57–137 is disordered; sequence AISNILNRGH…DFTKNSQVGS (81 aa). Lysine 75 participates in a covalent cross-link: Glycyl lysine isopeptide (Lys-Gly) (interchain with G-Cter in SUMO2). Phosphoserine is present on serine 80. A compositionally biased stretch (polar residues) spans 112–123; it reads SKSSQSSVTVEN. Residues lysine 113, lysine 126, lysine 167, lysine 174, lysine 180, and lysine 187 each participate in a glycyl lysine isopeptide (Lys-Gly) (interchain with G-Cter in SUMO2) cross-link. Polar residues predominate over residues 176–185; that stretch reads PSTSKVNSVT. The segment at 176–223 is disordered; sequence PSTSKVNSVTPKKPKTSEDVPQINPSTSLPLIGSPPVTSSQVMLSKGT. Residues 211 to 223 show a composition bias toward polar residues; that stretch reads PVTSSQVMLSKGT. Threonine 223 bears the Phosphothreonine mark. Position 227 is a phosphoserine (serine 227). Lysine 273 participates in a covalent cross-link: Glycyl lysine isopeptide (Lys-Gly) (interchain with G-Cter in SUMO2). 5 consecutive C2H2-type zinc fingers follow at residues 316–338, 353–376, 383–406, 413–436, and 470–492; these read FKCF…MKHH, TTCQ…ESTH, TICK…KDTH, YVCQ…RAAH, and HRCP…KAQH. Residue lysine 522 forms a Glycyl lysine isopeptide (Lys-Gly) (interchain with G-Cter in SUMO2) linkage. The span at 535 to 579 shows a compositional bias: polar residues; it reads SFLQVTPPTSQNTTARNPRKSNASRSKTSKLHATTSTASKVNTSK. Residues 535 to 602 are disordered; that stretch reads SFLQVTPPTS…YKQKRQRNRK (68 aa). At threonine 540 the chain carries Phosphothreonine. Glycyl lysine isopeptide (Lys-Gly) (interchain with G-Cter in SUMO2) cross-links involve residues lysine 564 and lysine 574. The span at 580 to 602 shows a compositional bias: basic residues; the sequence is PRGRIAKSKAKPSYKQKRQRNRK.

The protein localises to the nucleus. Functionally, may function as a transcription factor. In Homo sapiens (Human), this protein is Zinc finger protein 280C (ZNF280C).